Consider the following 209-residue polypeptide: Large ribosomal subunit protein bL21m (209 aa).

Residues 1–43 (MAAAIAASALPGAFGRLVSVCSRSILASQGSGSASLWSASRRF) constitute a mitochondrion transit peptide.

This sequence belongs to the bacterial ribosomal protein bL21 family. As to quaternary structure, component of the mitochondrial ribosome large subunit (39S) which comprises a 16S rRNA and about 50 distinct proteins.

It is found in the mitochondrion. This is Large ribosomal subunit protein bL21m (Mrpl21) from Mus musculus (Mouse).